We begin with the raw amino-acid sequence, 117 residues long: Probable prefoldin subunit 1 (117 aa).

The protein belongs to the prefoldin subunit beta family. Heterohexamer of two PFD-alpha type and four PFD-beta type subunits.

It localises to the cytoplasm. Binds specifically to cytosolic chaperonin (c-CPN) and transfers target proteins to it. Binds to nascent polypeptide chain and promotes folding in an environment in which there are many competing pathways for nonnative proteins. Has a role in gonadogenesis. The sequence is that of Probable prefoldin subunit 1 (pfd-1) from Caenorhabditis briggsae.